The chain runs to 1189 residues: Pumilio homolog 1 (1189 aa).

Disordered stretches follow at residues 24–65, 233–288, 491–525, 614–652, and 743–774; these read QHAQ…SSPV, SCLR…QNGI, QQTT…GQQT, AGTT…NNSL, and GPVG…SSLN. Residues 45-58 are compositionally biased toward low complexity; sequence QAQPQPAANQALAA. Residues 250–277 are compositionally biased toward basic and acidic residues; that stretch reads NDKGDKKNKGTFDGDKLGDLKEEGDVMD. The span at 491–503 shows a compositional bias: low complexity; sequence QQTTQQTQQGQQQ. Positions 512 to 525 are enriched in polar residues; that stretch reads RPLTPNQNQQGQQT. Low complexity-rich tracts occupy residues 627–652 and 764–774; these read QQPQ…NNSL and LSSHGSSSSLN. The PUM-HD domain occupies 829-1171; sequence GRSRLLEDFR…HILAKLEKYY (343 aa). 8 Pumilio repeats span residues 849-884, 885-920, 921-958, 959-994, 995-1030, 1031-1066, 1067-1102, and 1106-1145; these read EIAG…LVFN, EILQ…ALAE, RIRG…EMVR, ELDG…FIID, AFKG…PILE, ELHQ…KIVA, EIRG…MLID, and TMND…IVMH. Residues 864-868 form an adenine-nucleotide binding in RNA target region; sequence SRFIQ. A uracil-nucleotide binding in RNA target region spans residues 900 to 904; it reads NYVIQ. Positions 936-940 are adenine-nucleotide binding in RNA target; the sequence is CRVIQ. Residues 974 to 978 form a non-specific-nucleotide binding in RNA target region; that stretch reads NHVVQ. An adenine-nucleotide binding in RNA target region spans residues 1010 to 1014; the sequence is CRVIQ. The uracil-nucleotide binding in RNA target stretch occupies residues 1046–1050; it reads NYVIQ. Guanine-nucleotide binding in RNA target regions lie at residues 1082 to 1086 and 1083 to 1086; these read SNVVE and NVVE. The uracil-nucleotide binding in RNA target stretch occupies residues 1125 to 1129; it reads NYVVQ.

In terms of tissue distribution, detected in embryonic male and female gonads, heart, liver and muscle. Detected in adult brain, testis, ovary, heart, lung, spleen, kidney and muscle.

The protein localises to the cytoplasm. The protein resides in the P-body. It is found in the cytoplasmic granule. Functionally, sequence-specific RNA-binding protein that acts as a post-transcriptional repressor by binding the 3'-UTR of mRNA targets. Binds to an RNA consensus sequence, the Pumilio Response Element (PRE), 5'-UGUANAUA-3', that is related to the Nanos Response Element (NRE). Mediates post-transcriptional repression of transcripts via different mechanisms: acts via direct recruitment of the CCR4-POP2-NOT deadenylase leading to translational inhibition and mRNA degradation. Also mediates deadenylation-independent repression by promoting accessibility of miRNAs. This chain is Pumilio homolog 1 (PUM1), found in Gallus gallus (Chicken).